The primary structure comprises 317 residues: tRNA dimethylallyltransferase (317 aa).

14–21 (GPTAVGKT) contributes to the ATP binding site. 16–21 (TAVGKT) lines the substrate pocket. The interaction with substrate tRNA stretch occupies residues 39–42 (DSMQ).

The protein belongs to the IPP transferase family. As to quaternary structure, monomer. Mg(2+) serves as cofactor.

The catalysed reaction is adenosine(37) in tRNA + dimethylallyl diphosphate = N(6)-dimethylallyladenosine(37) in tRNA + diphosphate. Catalyzes the transfer of a dimethylallyl group onto the adenine at position 37 in tRNAs that read codons beginning with uridine, leading to the formation of N6-(dimethylallyl)adenosine (i(6)A). This is tRNA dimethylallyltransferase from Bacillus cereus (strain B4264).